Consider the following 323-residue polypeptide: Beta-ketoacyl-[acyl-carrier-protein] synthase III (323 aa).

Residues Cys-113 and His-250 contribute to the active site. The tract at residues 251-255 (QANRR) is ACP-binding. Asn-280 is a catalytic residue.

It belongs to the thiolase-like superfamily. FabH family. In terms of assembly, homodimer.

It localises to the cytoplasm. It carries out the reaction malonyl-[ACP] + acetyl-CoA + H(+) = 3-oxobutanoyl-[ACP] + CO2 + CoA. It functions in the pathway lipid metabolism; fatty acid biosynthesis. Functionally, catalyzes the condensation reaction of fatty acid synthesis by the addition to an acyl acceptor of two carbons from malonyl-ACP. Catalyzes the first condensation reaction which initiates fatty acid synthesis and may therefore play a role in governing the total rate of fatty acid production. Possesses both acetoacetyl-ACP synthase and acetyl transacylase activities. Its substrate specificity determines the biosynthesis of branched-chain and/or straight-chain of fatty acids. The chain is Beta-ketoacyl-[acyl-carrier-protein] synthase III from Rhizobium meliloti (strain 1021) (Ensifer meliloti).